The chain runs to 234 residues: Probable flavin reductase (234 aa).

Residue 112-116 participates in pyridine binding; sequence GGTGL.

This sequence belongs to the Fre/LuxG FAD/NAD(P) flavoprotein oxidoreductase family.

Its function is as follows. Probable flavin reductase in the luminescent systems of different marine bacteria. The polypeptide is Probable flavin reductase (luxG) (Photobacterium leiognathi).